We begin with the raw amino-acid sequence, 350 residues long: Protein RecA (350 aa).

67-74 (GPESSGKT) contributes to the ATP binding site.

The protein belongs to the RecA family.

Its subcellular location is the cytoplasm. Can catalyze the hydrolysis of ATP in the presence of single-stranded DNA, the ATP-dependent uptake of single-stranded DNA by duplex DNA, and the ATP-dependent hybridization of homologous single-stranded DNAs. It interacts with LexA causing its activation and leading to its autocatalytic cleavage. The polypeptide is Protein RecA (Baumannia cicadellinicola subsp. Homalodisca coagulata).